The sequence spans 449 residues: Na(+)/H(+) antiporter NhaA 1 (449 aa).

11 helical membrane passes run 32–52 (IEATSGAVLLLATVVALTLSN), 87–107 (GLMTLFFFIVALEIKREVVLG), 114–134 (MVAFSVVAAAGGMLVPMGLYL), 145–165 (GWGVVMPTDTAFVIGCLALLG), 174–194 (VFLLSLAVVDDLAAILVVAVG), 202–222 (TALALGAVGLVIIRGMALLGV), 233–253 (AIIWLAVNASGIHATIVGVIL), 318–338 (WVAFGVMPLFALANAGVSITI), 347–367 (LAVMAGFVLGKPIGVTAFAWL), 382–402 (WGGLVGGALLTGIGFTMALFI), and 417–437 (LGILAASVVSSVAGLTLLCMF).

It belongs to the NhaA Na(+)/H(+) (TC 2.A.33) antiporter family.

It localises to the cell inner membrane. The catalysed reaction is Na(+)(in) + 2 H(+)(out) = Na(+)(out) + 2 H(+)(in). Functionally, na(+)/H(+) antiporter that extrudes sodium in exchange for external protons. This is Na(+)/H(+) antiporter NhaA 1 from Acidiphilium cryptum (strain JF-5).